We begin with the raw amino-acid sequence, 174 residues long: Translation initiation factor IF-3 (174 aa).

Belongs to the IF-3 family. In terms of assembly, monomer.

Its subcellular location is the cytoplasm. IF-3 binds to the 30S ribosomal subunit and shifts the equilibrium between 70S ribosomes and their 50S and 30S subunits in favor of the free subunits, thus enhancing the availability of 30S subunits on which protein synthesis initiation begins. This chain is Translation initiation factor IF-3, found in Helicobacter hepaticus (strain ATCC 51449 / 3B1).